The chain runs to 122 residues: Lycotoxin-Pa4a (122 aa).

The signal sequence occupies residues 1-20; sequence MKLGIFFSVFFLAMIHSCLS. Residues 21-47 constitute a propeptide that is removed on maturation; sequence ETNEDKNLESYFREDDLKALSFGEYAR. Intrachain disulfides connect Cys-58/Cys-73, Cys-65/Cys-82, Cys-72/Cys-100, and Cys-84/Cys-98.

This sequence belongs to the neurotoxin 19 (CSTX) family. In terms of tissue distribution, expressed by the venom gland.

The protein resides in the secreted. It is found in the target cell membrane. Its function is as follows. Potent antibacterial peptide with anti-inflammatory properties. Inhibits both Gram-negative and Gram-positive bacteria by disrupting both the outer membrane and the cytosolic membrane of bacteria. Also downregulates the expression of pro-inflammatory mediators (cyclooxygenase-2 (PTGS2/COX2), nitric oxide-induced synthase (NOS2), IL-1 beta (IL1B), TNF-alpha (TNF)) and upregulates the level of anti-inflammatory cytokine (IL10) by inactivating mitogen-activated protein kinase signaling in a lipopolysaccharide-stimulated murine macrophage cell line. This is Lycotoxin-Pa4a from Pardosa astrigera (Wolf spider).